Here is a 519-residue protein sequence, read N- to C-terminus: Aldehyde dehydrogenase X, mitochondrial (519 aa).

The transit peptide at 1 to 19 (MLNARFLVPRLLCLQGRTT) directs the protein to the mitochondrion. K53 bears the N6-acetyllysine mark. N6-acetyllysine; alternate is present on K54. K54 carries the N6-succinyllysine; alternate modification. 264–269 (GSTEVG) serves as a coordination point for NAD(+). The Proton acceptor role is filled by E287. The Nucleophile role is filled by C321. N6-acetyllysine; alternate is present on residues K366, K385, K401, and K428. 4 positions are modified to N6-succinyllysine; alternate: K366, K385, K401, and K428. The residue at position 431 (K431) is an N6-acetyllysine.

The protein belongs to the aldehyde dehydrogenase family. In terms of assembly, homotetramer.

The protein resides in the mitochondrion matrix. It catalyses the reaction an aldehyde + NAD(+) + H2O = a carboxylate + NADH + 2 H(+). Its pathway is alcohol metabolism; ethanol degradation; acetate from ethanol: step 2/2. Functionally, ALDHs play a major role in the detoxification of alcohol-derived acetaldehyde. They are involved in the metabolism of corticosteroids, biogenic amines, neurotransmitters, and lipid peroxidation. The sequence is that of Aldehyde dehydrogenase X, mitochondrial (Aldh1b1) from Rattus norvegicus (Rat).